Consider the following 138-residue polypeptide: Translation initiation factor 5A (138 aa).

At Lys37 the chain carries Hypusine.

It belongs to the eIF-5A family.

The protein localises to the cytoplasm. Its function is as follows. Functions by promoting the formation of the first peptide bond. This chain is Translation initiation factor 5A (eif5a), found in Pyrococcus horikoshii (strain ATCC 700860 / DSM 12428 / JCM 9974 / NBRC 100139 / OT-3).